An 86-amino-acid polypeptide reads, in one-letter code: Putative membrane protein insertion efficiency factor (86 aa).

It belongs to the UPF0161 family.

The protein localises to the cell inner membrane. Could be involved in insertion of integral membrane proteins into the membrane. The polypeptide is Putative membrane protein insertion efficiency factor (Pseudomonas aeruginosa (strain LESB58)).